The primary structure comprises 57 residues: uncharacterized protein (57 aa).

Residues 12-34 (VIAVLSLFVFAVAVFFVGMALLT) traverse the membrane as a helical segment.

It localises to the membrane. This is an uncharacterized protein from Pasteurella multocida (strain Pm70).